A 305-amino-acid chain; its full sequence is Target of rapamycin complex subunit LST8-1 (305 aa).

7 WD repeats span residues 1 to 30 (MSQP…CYRT), 33 to 71 (YPDS…PQPV), 76 to 115 (SHTN…CQKE), 117 to 156 (ESVA…CSCE), 160 to 199 (EVDT…QTMT), 209 to 248 (AHNG…LEKV), and 251 to 292 (GHQR…KVYQ).

Belongs to the WD repeat LST8 family. In terms of assembly, the target of rapamycin complex 1 (TORC1) is composed of at least RAPTOR, LST8 and TOR. Interacts with TOR. As to expression, expressed in the root central cylinder, root tips, emerging lateral roots, vasculature of cotyledons, leaf stomata, leaf stipules, anthers, pollen, filaments, and vasculature of petals and sepals.

The protein resides in the endosome. Component of TORC1 complex, which is an essential cell growth regulator that controls plant development. Acts by activating transcription, protein synthesis and ribosome biogenesis, and inhibiting mRNA degradation and autophagy. Involved in regulating amino acid accumulation and the synthesis of myo-inositol and raffinose during plant adaptation to long days. Involved in the regulation of plant growth and abscisic acid (ABA) accumulation. Acts as a positive regulation of the ABA biosynthetic genes ZEP, NCED3 and AAO3, and negative regulator of the ABA catabolic genes CYP707A2 and CYP707A3. This is Target of rapamycin complex subunit LST8-1 from Arabidopsis thaliana (Mouse-ear cress).